The primary structure comprises 775 residues: Phosphoribosylformylglycinamidine synthase subunit PurL (775 aa).

His81 is a catalytic residue. Tyr84 and Lys123 together coordinate ATP. Glu125 lines the Mg(2+) pocket. Substrate is bound by residues 126 to 129 (SHNH) and Arg148. The active-site Proton acceptor is the His127. Asp149 contacts Mg(2+). A substrate-binding site is contributed by Gln272. Asp300 is a binding site for Mg(2+). 344-346 (ESQ) provides a ligand contact to substrate. Positions 525 and 562 each coordinate ATP. Asn563 is a Mg(2+) binding site. Ser565 is a binding site for substrate.

Belongs to the FGAMS family. Monomer. Part of the FGAM synthase complex composed of 1 PurL, 1 PurQ and 2 PurS subunits.

It localises to the cytoplasm. The catalysed reaction is N(2)-formyl-N(1)-(5-phospho-beta-D-ribosyl)glycinamide + L-glutamine + ATP + H2O = 2-formamido-N(1)-(5-O-phospho-beta-D-ribosyl)acetamidine + L-glutamate + ADP + phosphate + H(+). Its pathway is purine metabolism; IMP biosynthesis via de novo pathway; 5-amino-1-(5-phospho-D-ribosyl)imidazole from N(2)-formyl-N(1)-(5-phospho-D-ribosyl)glycinamide: step 1/2. Part of the phosphoribosylformylglycinamidine synthase complex involved in the purines biosynthetic pathway. Catalyzes the ATP-dependent conversion of formylglycinamide ribonucleotide (FGAR) and glutamine to yield formylglycinamidine ribonucleotide (FGAM) and glutamate. The FGAM synthase complex is composed of three subunits. PurQ produces an ammonia molecule by converting glutamine to glutamate. PurL transfers the ammonia molecule to FGAR to form FGAM in an ATP-dependent manner. PurS interacts with PurQ and PurL and is thought to assist in the transfer of the ammonia molecule from PurQ to PurL. The chain is Phosphoribosylformylglycinamidine synthase subunit PurL from Agrobacterium fabrum (strain C58 / ATCC 33970) (Agrobacterium tumefaciens (strain C58)).